The sequence spans 149 residues: Histone H2B.3, sperm (149 aa).

Residues M1–R57 form a disordered region. 6 consecutive short sequence motifs (SPKK motif) follow at residues S4 to K7, S9 to K12, S14 to K17, S19 to K22, S24 to R27, and S30 to R33. The segment covering S9–P20 has biased composition (basic residues). Residues S19, S24, and S30 each carry the phosphoserine modification. A compositionally biased stretch (basic residues) spans A29–R57. S136 carries an O-linked (GlcNAc) serine glycan. A Glycyl lysine isopeptide (Lys-Gly) (interchain with G-Cter in ubiquitin) cross-link involves residue K144.

The protein belongs to the histone H2B family. As to quaternary structure, the nucleosome is a histone octamer containing two molecules each of H2A, H2B, H3 and H4 assembled in one H3-H4 heterotetramer and two H2A-H2B heterodimers. The octamer wraps approximately 147 bp of DNA. Post-translationally, monoubiquitination of Lys-144 gives a specific tag for epigenetic transcriptional activation and is also prerequisite for histone H3 'Lys-4' and 'Lys-79' methylation. In terms of processing, phosphorylated on SPKK motifs 4, 5 and 6; which may regulate DNA binding. Dephosphorylated during maturation of spermatids to mature sperm and rephosphorylated at fertilization. GlcNAcylation at Ser-136 promotes monoubiquitination of Lys-144. It fluctuates in response to extracellular glucose, and associates with transcribed genes.

The protein resides in the nucleus. The protein localises to the chromosome. In terms of biological role, core component of nucleosome. Nucleosomes wrap and compact DNA into chromatin, limiting DNA accessibility to the cellular machineries which require DNA as a template. Histones thereby play a central role in transcription regulation, DNA repair, DNA replication and chromosomal stability. DNA accessibility is regulated via a complex set of post-translational modifications of histones, also called histone code, and nucleosome remodeling. This chain is Histone H2B.3, sperm, found in Parechinus angulosus (Angulate sea urchin).